The sequence spans 247 residues: uncharacterized protein (247 aa).

The tract at residues 161-187 (KEQSDATSDATTSEKNKSPECPKATTE) is disordered. The segment covering 172–187 (TSEKNKSPECPKATTE) has biased composition (basic and acidic residues).

This is an uncharacterized protein from Mus musculus (Mouse).